The sequence spans 274 residues: Pyrroline-5-carboxylate reductase 3 (274 aa).

This sequence belongs to the pyrroline-5-carboxylate reductase family. In terms of assembly, homodecamer; composed of 5 homodimers.

The protein resides in the cytoplasm. It catalyses the reaction L-proline + NADP(+) = (S)-1-pyrroline-5-carboxylate + NADPH + 2 H(+). It carries out the reaction L-proline + NAD(+) = (S)-1-pyrroline-5-carboxylate + NADH + 2 H(+). It participates in amino-acid biosynthesis; L-proline biosynthesis; L-proline from L-glutamate 5-semialdehyde: step 1/1. In terms of biological role, oxidoreductase that catalyzes the last step in proline biosynthesis, which corresponds to the reduction of pyrroline-5-carboxylate (P5C) to L-proline using NAD(P)H. Proline is synthesized from either glutamate or ornithine; both are converted to P5C, and then to proline via pyrroline-5-carboxylate reductases (PYCRs). PYCR3 is exclusively linked to the biosynthesis of proline from ornithine. The polypeptide is Pyrroline-5-carboxylate reductase 3 (Xenopus laevis (African clawed frog)).